Consider the following 204-residue polypeptide: Tumor protein D53 (204 aa).

The disordered stretch occupies residues 1–20 (MEAQAQGLLETEPLQGTDED). The stretch at 22-73 (VASADFSSMLSEEEKEELKAELVQLEDEITTLRQVLSAKERHLVEIKQKLGM) forms a coiled coil. 4 positions are modified to phosphoserine: S29, S86, S122, and S131. Position 133 is an omega-N-methylarginine (R133). The residue at position 146 (T146) is a Phosphothreonine. 2 positions are modified to phosphoserine: S149 and S174.

Belongs to the TPD52 family. In terms of assembly, forms a homodimer or heterodimer with other members of the family.

The polypeptide is Tumor protein D53 (TPD52L1) (Homo sapiens (Human)).